We begin with the raw amino-acid sequence, 150 residues long: SsrA-binding protein (150 aa).

This sequence belongs to the SmpB family.

It is found in the cytoplasm. Functionally, required for rescue of stalled ribosomes mediated by trans-translation. Binds to transfer-messenger RNA (tmRNA), required for stable association of tmRNA with ribosomes. tmRNA and SmpB together mimic tRNA shape, replacing the anticodon stem-loop with SmpB. tmRNA is encoded by the ssrA gene; the 2 termini fold to resemble tRNA(Ala) and it encodes a 'tag peptide', a short internal open reading frame. During trans-translation Ala-aminoacylated tmRNA acts like a tRNA, entering the A-site of stalled ribosomes, displacing the stalled mRNA. The ribosome then switches to translate the ORF on the tmRNA; the nascent peptide is terminated with the 'tag peptide' encoded by the tmRNA and targeted for degradation. The ribosome is freed to recommence translation, which seems to be the essential function of trans-translation. The chain is SsrA-binding protein from Coprothermobacter proteolyticus (strain ATCC 35245 / DSM 5265 / OCM 4 / BT).